Reading from the N-terminus, the 443-residue chain is Major royal jelly protein 7 (443 aa).

An N-terminal signal peptide occupies residues 1–17 (MTRWLFMVACLGIACQG). Residues N145, N161, N178, and N321 are each glycosylated (N-linked (GlcNAc...) asparagine).

Belongs to the major royal jelly protein family. In terms of tissue distribution, found in and secreted from the hypopharyngeal glands of the worker honey bee (at protein level); expression peaks at 12 days post eclosion. Expressed in the brains of adult worker bees peaking at 12 days post eclosion (at protein level). Expressed in the spermatheca of adult queen bees (at protein level); Expression levels are higher in mated queens than in virgin queens.

It is found in the secreted. Its function is as follows. Component of royal jelly, a substance produced in the hypopharyngeal gland containing proteins, free amino acids, fatty acids, sugars and other nutrients, which is fed to developing larvae by worker nurse bees. All larvae are fed some royal jelly (also known as worker jelly) early in their development but it forms the principal source of nutrition for larvae destined to become queen bees. Produced in the spermatheca of adult queen bees, along with other major royal jelly proteins, where it may act as a nutrient supply for sperm stored by mated queens, or be involved in energy metabolism. The chain is Major royal jelly protein 7 from Apis mellifera (Honeybee).